Consider the following 883-residue polypeptide: DNA double-strand break repair Rad50 ATPase (883 aa).

ATP-binding positions include Lys12, 32–38, and Gln137; that span reads NGSGKSS. Residues 244-283 are a coiled coil; the sequence is ERYEESRTALADVEETIADVREAVAEAERERETLADRVSD. Disordered stretches follow at residues 271–290 and 305–326; these read ERERETLADRVSDHRERASD and DDPDAEDASAERDAVADQREAV. Residues 313 to 326 show a composition bias toward basic and acidic residues; that stretch reads SAERDAVADQREAV. Coiled-coil stretches lie at residues 336 to 389 and 414 to 452; these read AVSR…IEAL and LDDATAERDELRERVATLRADRQSAADRVAEAEALLDEG. A Zinc-hook domain is found at 407–506; the sequence is FGAAEAFLDD…RVDRGESLVA (100 aa). Residues Cys454 and Cys457 each contribute to the Zn(2+) site. Residues 508–565 are disordered; sequence EDRVDDLEQQRERAVERRDEQADIADAKRDQAAEKRDRAADLDAEAEDARADAAAKRD. Coiled coils occupy residues 571 to 604 and 668 to 720; these read RETLAALNADQTALKERLDALADLVDRLEAAADA and KLQA…VTAL.

This sequence belongs to the SMC family. RAD50 subfamily. As to quaternary structure, homodimer. Forms a heterotetramer composed of two Mre11 subunits and two Rad50 subunits. Zn(2+) serves as cofactor.

In terms of biological role, part of the Rad50/Mre11 complex, which is involved in the early steps of DNA double-strand break (DSB) repair. Rad50 controls the balance between DNA end bridging and DNA resection via ATP-dependent structural rearrangements of the Rad50/Mre11 complex. The sequence is that of DNA double-strand break repair Rad50 ATPase from Halobacterium salinarum (strain ATCC 700922 / JCM 11081 / NRC-1) (Halobacterium halobium).